The following is a 511-amino-acid chain: Protein phosphatase 2C 16 (511 aa).

The N-terminal stretch at 1 to 22 is a signal peptide; sequence MEEMTPAVAMTLSLAANTMCES. One can recognise a PPM-type phosphatase domain in the interval 189-501; it reads LWGTVSIQGN…DNISIIVIDL (313 aa). Mn(2+) contacts are provided by D243, G244, D432, and D492.

It belongs to the PP2C family. As to quaternary structure, interacts with SWI3B (via N-terminus). Interacts with ABA-bounded PYR1, PYL1, PYL2, PYL3, PYL4, PYL5, PYL6, PYL8 and PYL9, and with free PYL2, PYL3, PYL4, PYL10 and PYL13. Requires Mg(2+) as cofactor. Mn(2+) serves as cofactor. As to expression, expressed in seeds, roots, stems, leaves and flowers, especially in meristematic tissues, guard cells, embryo and siliques.

The protein resides in the cytoplasm. It is found in the nucleus. The catalysed reaction is O-phospho-L-seryl-[protein] + H2O = L-seryl-[protein] + phosphate. It carries out the reaction O-phospho-L-threonyl-[protein] + H2O = L-threonyl-[protein] + phosphate. Its activity is regulated as follows. Repressed by PYR/PYL/RCAR ABA receptors in an ABA-dependent manner. Its function is as follows. Key component and repressor of the abscisic acid (ABA) signaling pathway that regulates numerous ABA responses, such as stomatal closure, seed germination and inhibition of vegetative growth. Confers enhanced sensitivity to drought. This Arabidopsis thaliana (Mouse-ear cress) protein is Protein phosphatase 2C 16 (HAB1).